The sequence spans 3473 residues: AP2/ERF domain-containing protein PFD0985w (3473 aa).

9 disordered regions span residues 35–61 (NNII…NNNN), 366–450 (KMER…HLVC), 647–704 (NNNN…INAK), 750–801 (NIIK…RKKK), 1096–1196 (VDNN…MNMN), 1300–1328 (DNTS…NSRG), 1388–1418 (HLRS…GAER), 1773–1807 (NNTG…NNKV), and 1864–1898 (IGED…NNLS). Low complexity-rich tracts occupy residues 44 to 61 (NGHN…NNNN), 396 to 442 (NNND…NSNN), and 647 to 666 (NNNN…NNNN). The segment covering 683-694 (TGDKHETSKKED) has biased composition (basic and acidic residues). Residues 751–768 (IIKSDNVNNNNNNNNNNN) show a composition bias toward low complexity. Basic residues predominate over residues 785–801 (NKKHKKKNIHDNNRKKK). Positions 1098–1156 (NNNNNNNNNNNNNVNNISNNGTNLEENANNANNANNPNNANNPNNANNSNNADYVNDYN) are enriched in low complexity. Residues 1160 to 1171 (KEEDDDDEEEDN) show a composition bias toward acidic residues. The segment covering 1182–1196 (TNYNININGENMNMN) has biased composition (low complexity). 2 stretches are compositionally biased toward polar residues: residues 1314–1326 (VGSN…NNNS) and 1390–1412 (RSSN…SSMR). Residues 1773 to 1805 (NNTGTTQNNNKYGTNSNNNNNNNNNNNNNNNNN) show a composition bias toward low complexity. A compositionally biased stretch (basic residues) spans 1881–1893 (LKRRKNGNSKRAK). The segment at residues 1957 to 2011 (PLPTGVYFDSARKLWRCQWKENGKFKTKGFSLIHYSTLEEARKQCILYRCDVGNI) is a DNA-binding region (AP2/ERF 1). Disordered stretches follow at residues 2068-2088 (EKTG…NVNN), 2319-2343 (QVDV…SNSK), 2387-2470 (TNDN…NIRS), 2520-2584 (LGNG…NYNN), 2609-2677 (LYGK…PASN), 2840-2860 (MNNN…NNVK), 2881-2902 (NDKL…SSSP), and 2937-2960 (KYVE…KKDE). A compositionally biased stretch (basic residues) spans 2333-2342 (KRSKRSKSNS). Composition is skewed to low complexity over residues 2388-2400 (NDNN…NNND) and 2409-2460 (DNNN…NNND). Positions 2525 to 2542 (DGEEEGGGDYDEKEDDLL) are enriched in acidic residues. Composition is skewed to low complexity over residues 2557-2584 (NNNN…NYNN) and 2615-2624 (NNNNNNNNNN). Residues 2663 to 2675 (LLNSQVNESSAPA) show a composition bias toward polar residues. Residues 2841–2858 (NNNNNNNNNNNNNNNNNN) are compositionally biased toward low complexity. Residues 2943-2953 (NGDKETNDYNT) are compositionally biased toward basic and acidic residues. The AP2/ERF 2 DNA-binding region spans 3268–3321 (SLPKGIYYDHAKKLYRVQYIINNSIKTKGFSVKKLGLAQAKIEAESFRNFCLEN). Positions 3369 to 3391 (KMSINNDGNNNDGNNNDGNNNDD) are enriched in low complexity. The tract at residues 3369–3473 (KMSINNDGNN…NNDNEMSQNE (105 aa)) is disordered. The segment covering 3392–3403 (NNNDDNNNDDNN) has biased composition (acidic residues). The segment covering 3404 to 3457 (NDGNNNDDNNNEGINNDDNNNEGINNDDNNNEGINNNDDNNNNDDNNNEGINND) has biased composition (low complexity).

It is found in the nucleus. In Plasmodium falciparum (isolate 3D7), this protein is AP2/ERF domain-containing protein PFD0985w.